The following is a 182-amino-acid chain: Endoribonuclease YbeY (182 aa).

Zn(2+) contacts are provided by H115, H119, and H125.

This sequence belongs to the endoribonuclease YbeY family. Zn(2+) serves as cofactor.

It is found in the cytoplasm. Single strand-specific metallo-endoribonuclease involved in late-stage 70S ribosome quality control and in maturation of the 3' terminus of the 16S rRNA. This Bifidobacterium longum subsp. infantis (strain ATCC 15697 / DSM 20088 / JCM 1222 / NCTC 11817 / S12) protein is Endoribonuclease YbeY.